A 710-amino-acid chain; its full sequence is Zinc finger and BTB domain-containing protein 24 (710 aa).

The BTB domain maps to 37 to 103 (CDITLIVENV…IYTGYLHASE (67 aa)). Disordered stretches follow at residues 134–176 (APKP…EGRS) and 202–256 (EEDS…SRRR). Residues 159–171 (KRKRGRPRKANGL) constitute a DNA-binding region (a.T hook). Composition is skewed to basic and acidic residues over residues 202-219 (EEDS…KESE) and 231-244 (PAEK…KAGD). 8 consecutive C2H2-type zinc fingers follow at residues 293–315 (ARCK…QRRH), 321–343 (FKCN…TRMH), 349–371 (YTCT…MSLH), 377–399 (FTCD…YRVH), 405–427 (PECS…LRTH), 433–455 (FTCE…IRIH), 461–483 (YSCS…CILH), and 489–511 (FSCP…LKIH). A disordered region spans residues 651-676 (EQTTSSVPAADTGARATPVPSTRPGA).

The protein belongs to the krueppel C2H2-type zinc-finger protein family. As to quaternary structure, interacts with MN1. As to expression, widely expressed. Highest level in liver, testis and kidney.

The protein localises to the nucleus. May be involved in BMP2-induced transcription. In Mus musculus (Mouse), this protein is Zinc finger and BTB domain-containing protein 24 (Zbtb24).